A 30-amino-acid polypeptide reads, in one-letter code: Brevinin-2Rg (30 aa).

An intrachain disulfide couples cysteine 24 to cysteine 30.

As to expression, expressed by the skin glands.

The protein localises to the secreted. Its function is as follows. Antimicrobial peptide. This chain is Brevinin-2Rg, found in Pelophylax ridibundus (Marsh frog).